We begin with the raw amino-acid sequence, 321 residues long: Olfactory receptor 5P60 (321 aa).

Over 1 to 28 the chain is Extracellular; the sequence is MAFLHNGNHTAVTEFILLGLTDDPVLRI. Asn8 carries an N-linked (GlcNAc...) asparagine glycan. Residues 29–49 traverse the membrane as a helical segment; sequence VLFTIILCIYLVTVSGNLSTI. Residues 50–57 lie on the Cytoplasmic side of the membrane; it reads LLIRVSSQ. Residues 58–78 traverse the membrane as a helical segment; the sequence is LHHPMYFFLSHLASADIGYSS. Residues 79–102 lie on the Extracellular side of the membrane; it reads SVTPNMLVNFLVKQNTISYIGCSI. Cys100 and Cys192 are disulfide-bonded. The helical transmembrane segment at 103 to 123 threads the bilayer; sequence QFGSAAFFGGLECFLLAVMAY. Topologically, residues 124-136 are cytoplasmic; sequence DRFVAICNPLLYS. The chain crosses the membrane as a helical span at residues 137-157; the sequence is TKMSTQVCVQLVVGSYIGGFL. The Extracellular portion of the chain corresponds to 158-199; the sequence is NASFATVSFLFLFFCGPNIINHFFCDFAPLIELSCSDVRISV. Residues 200 to 220 form a helical membrane-spanning segment; that stretch reads LVTSFSAGTVTMLTVLVIAIS. At 221–240 the chain is on the cytoplasmic side; the sequence is YTYILITILKMRSTEGRHKA. A helical transmembrane segment spans residues 241–261; the sequence is FSTCTSHLTAVSLFYGTITFI. The Extracellular portion of the chain corresponds to 262–274; it reads YVMPKSRYSTDQN. A helical transmembrane segment spans residues 275–295; that stretch reads KVVSVFYMVVIPMLNPLIYSL. Over 296–321 the chain is Cytoplasmic; that stretch reads RNNEIKGALRRHLGKKIFSQSNILFY.

It belongs to the G-protein coupled receptor 1 family.

It is found in the cell membrane. In terms of biological role, potential odorant receptor. This chain is Olfactory receptor 5P60, found in Mus musculus (Mouse).